Reading from the N-terminus, the 761-residue chain is Dipeptidyl-peptidase 4 (761 aa).

An N-terminal signal peptide occupies residues 1–15 (MTLSAWIILVTLAMA). Active-site charge relay system residues include serine 622, aspartate 706, and histidine 738.

The protein belongs to the peptidase S9C family.

Its subcellular location is the membrane. In terms of biological role, may be involved in metabolism of dipeptides or may affect host defense mechanisms. The chain is Dipeptidyl-peptidase 4 (DPP) from Giardia intestinalis (Giardia lamblia).